Here is a 97-residue protein sequence, read N- to C-terminus: Lipolysis-activating peptide 1-alpha chain (97 aa).

The N-terminal stretch at 1–21 (MNITLFCSVFILISLAGLSVS) is a signal peptide. The LCN-type CS-alpha/beta domain maps to 25 to 88 (PGNYPMSLYG…FWAAHKNHCK (64 aa)). 3 disulfide bridges follow: Cys-39–Cys-62, Cys-48–Cys-67, and Cys-52–Cys-69.

Belongs to the long (3 C-C) scorpion toxin superfamily. In terms of assembly, monomer (edited version) and heterodimer (non-edited version) of this alpha chain and a beta chain (AC D9U2A2). Expressed by the venom gland.

The protein localises to the secreted. The heterodimer non-edited LVP1 induces lipolysis in rat adipocytes. Induction of lipolysis by LVP1 appears to be mediated through the beta-2 adrenergic receptor pathway (ADRB2). Functionally, the edited BmKBTx-like, similar to beta-toxins, may modulate voltage-gated sodium channels (Nav) and may block voltage-gated potassium channels (Kv). This is Lipolysis-activating peptide 1-alpha chain from Lychas mucronatus (Chinese swimming scorpion).